Reading from the N-terminus, the 585-residue chain is MASPGSGFWSFGSEDGSADPENPGTARAWCQVAQKFTGGIGNKLCALLYGDSGKPAEGGGSVTSRAATGKVACTCDQKPCNCPKGDVNYAFLHATDLLPACDGERPTLAFLQDVMNILLQYVVKSFDRSTKVIDFHYPNELLQEYNWELADQPQNLEEILTHCQTTLKYAIKTGHPRYFNQLSTGLDMVGLAADWLTSTANTNMFTYEIAPVFVLLEYVTLKKMREIIGWPGGSGDGIFSPGGAISNMYAMLIARYKMFPEVKEKGMAAVPRLIAFTSEHSHFSLKKGAAALGIGTDSVILIKCDERGKMIPSDLERRILEVKQKGFVPFLVSATAGTTVYGAFDPLLAVADICKKYKIWMHVDAAWGGGLLMSRKHKWKLSGVERANSVTWNPHKMMGVPLQCSALLVREEGLMQSCNQMHASYLFQQDKHYDLSYDTGDKALQCGRHVDVFKLWLMWRAKGTTGFEAHIDKCLELAEYLYTIIKNREGYEMVFDGKPQHTNVCFWFVPPSLRTLEDNEERMSRLSKVAPVIKARMMEYGTTMVSYQPLGDKVNFFRMVISNPAATHQDIDFLIEEIERLGQDL.

The interval 1 to 24 is disordered; the sequence is MASPGSGFWSFGSEDGSADPENPG. A phosphoserine mark is found at serine 3, serine 6, serine 10, and serine 13. 2 S-palmitoyl cysteine lipidation sites follow: cysteine 30 and cysteine 45. 181 to 183 serves as a coordination point for substrate; that stretch reads QLS. Lysine 396 is subject to N6-(pyridoxal phosphate)lysine. Position 558 (arginine 558) interacts with substrate.

Belongs to the group II decarboxylase family. As to quaternary structure, homodimer. Requires pyridoxal 5'-phosphate as cofactor. In terms of processing, phosphorylated; which does not affect kinetic parameters or subcellular location. Post-translationally, palmitoylated; which is required for presynaptic clustering.

It localises to the cytoplasm. Its subcellular location is the cytosol. The protein resides in the cytoplasmic vesicle. It is found in the presynaptic cell membrane. The protein localises to the golgi apparatus membrane. The catalysed reaction is L-glutamate + H(+) = 4-aminobutanoate + CO2. Functionally, catalyzes the production of GABA. This is Glutamate decarboxylase 2 (Gad2) from Mus musculus (Mouse).